Consider the following 109-residue polypeptide: Urocortin-2 (109 aa).

The N-terminal stretch at 1 to 22 (MTRWALVVFMVLMLDRVPGTPI) is a signal peptide. A propeptide spanning residues 23–67 (PTFQLLPQNYPETTPSSVSSESPSDTTTGPSASWSNSKASPYLDT) is cleaved from the precursor. The disordered stretch occupies residues 24–60 (TFQLLPQNYPETTPSSVSSESPSDTTTGPSASWSNSK). Low complexity predominate over residues 33-50 (PETTPSSVSSESPSDTTT). Residues 51–60 (GPSASWSNSK) show a composition bias toward polar residues. The residue at position 106 (Val-106) is a Valine amide; partial.

This sequence belongs to the sauvagine/corticotropin-releasing factor/urotensin I family. In terms of assembly, binds with high affinity to CRF receptors 2-alpha and 2-beta. Post-translationally, glycosylated.

The protein localises to the secreted. Its function is as follows. Suppresses food intake, delays gastric emptying and decreases heat-induced edema. Might represent an endogenous ligand for maintaining homeostasis after stress. The sequence is that of Urocortin-2 (Ucn2) from Rattus norvegicus (Rat).